We begin with the raw amino-acid sequence, 246 residues long: Biosynthetic peptidoglycan transglycosylase (246 aa).

A helical transmembrane segment spans residues 20–42; it reads SLRWVLAAPLLFAAASVLQVLAL.

The protein belongs to the glycosyltransferase 51 family.

It is found in the cell inner membrane. It catalyses the reaction [GlcNAc-(1-&gt;4)-Mur2Ac(oyl-L-Ala-gamma-D-Glu-L-Lys-D-Ala-D-Ala)](n)-di-trans,octa-cis-undecaprenyl diphosphate + beta-D-GlcNAc-(1-&gt;4)-Mur2Ac(oyl-L-Ala-gamma-D-Glu-L-Lys-D-Ala-D-Ala)-di-trans,octa-cis-undecaprenyl diphosphate = [GlcNAc-(1-&gt;4)-Mur2Ac(oyl-L-Ala-gamma-D-Glu-L-Lys-D-Ala-D-Ala)](n+1)-di-trans,octa-cis-undecaprenyl diphosphate + di-trans,octa-cis-undecaprenyl diphosphate + H(+). The protein operates within cell wall biogenesis; peptidoglycan biosynthesis. In terms of biological role, peptidoglycan polymerase that catalyzes glycan chain elongation from lipid-linked precursors. In Xanthomonas campestris pv. campestris (strain 8004), this protein is Biosynthetic peptidoglycan transglycosylase.